A 684-amino-acid chain; its full sequence is Cleavage and polyadenylation specificity factor subunit 3 (684 aa).

Position 2 is an N-acetylserine (Ser2). Residues His71, His73, Asp75, His76, His158, and Asp179 each contribute to the Zn(2+) site. His396 serves as the catalytic Proton donor. Residue His418 coordinates Zn(2+). Residues Lys462, Lys465, and Lys545 each participate in a glycyl lysine isopeptide (Lys-Gly) (interchain with G-Cter in SUMO) cross-link. Position 659 is a phosphoserine (Ser659). At Thr681 the chain carries Phosphothreonine.

This sequence belongs to the metallo-beta-lactamase superfamily. RNA-metabolizing metallo-beta-lactamase-like family. CPSF3 subfamily. Component of the cleavage and polyadenylation specificity factor (CPSF) complex, composed of CPSF1, CPSF2, CPSF3, CPSF4 and FIP1L1. Interacts with CPSF2, CSTF2 and SYMPK. Interacts with TUT1; the interaction is direct and mediates the recruitment of the CPSF complex on the 3'UTR of pre-mRNAs. Interacts with WDR33. Interacts with ZC3H3. Zn(2+) serves as cofactor. Sumoylated on Lys-462, Lys-465 and Lys-545, preferentially by SUMO3.

The protein localises to the nucleus. Functionally, component of the cleavage and polyadenylation specificity factor (CPSF) complex that plays a key role in pre-mRNA 3'-end formation, recognizing the AAUAAA signal sequence and interacting with poly(A) polymerase and other factors to bring about cleavage and poly(A) addition. Has endonuclease activity, and functions as an mRNA 3'-end-processing endonuclease. Also involved in the histone 3'-end pre-mRNA processing. U7 snRNP-dependent protein that induces both the 3'-endoribonucleolytic cleavage of histone pre-mRNAs and acts as a 5' to 3' exonuclease for degrading the subsequent downstream cleavage product (DCP) of mature histone mRNAs. Cleavage occurs after the 5'-ACCCA-3' sequence in the histone pre-mRNA leaving a 3'hydroxyl group on the upstream fragment containing the stem loop (SL) and 5' phosphate on the downstream cleavage product (DCP) starting with CU nucleotides. The U7-dependent 5' to 3' exonuclease activity is processive and degrades the DCP RNA substrate even after complete removal of the U7-binding site. Binds to the downstream cleavage product (DCP) of histone pre-mRNAs and the cleaved DCP RNA substrate in a U7 snRNP dependent manner. Required for entering/progressing through S-phase of the cell cycle. Required for the selective processing of microRNAs (miRNAs) during embryonic stem cell differentiation via its interaction with ISY1. Required for the biogenesis of all miRNAs from the pri-miR-17-92 primary transcript except miR-92a. Only required for the biogenesis of miR-290 and miR-96 from the pri-miR-290-295 and pri-miR-96-183 primary transcripts, respectively. The protein is Cleavage and polyadenylation specificity factor subunit 3 (CPSF3) of Bos taurus (Bovine).